The sequence spans 619 residues: 1-deoxy-D-xylulose-5-phosphate synthase (619 aa).

Residues His-74 and 115–117 (GHS) contribute to the thiamine diphosphate site. Asp-146 provides a ligand contact to Mg(2+). Thiamine diphosphate contacts are provided by residues 147–148 (GA), Asn-175, Tyr-285, and Glu-365. Asn-175 contacts Mg(2+).

It belongs to the transketolase family. DXPS subfamily. Homodimer. Requires Mg(2+) as cofactor. Thiamine diphosphate serves as cofactor.

It catalyses the reaction D-glyceraldehyde 3-phosphate + pyruvate + H(+) = 1-deoxy-D-xylulose 5-phosphate + CO2. Its pathway is metabolic intermediate biosynthesis; 1-deoxy-D-xylulose 5-phosphate biosynthesis; 1-deoxy-D-xylulose 5-phosphate from D-glyceraldehyde 3-phosphate and pyruvate: step 1/1. In terms of biological role, catalyzes the acyloin condensation reaction between C atoms 2 and 3 of pyruvate and glyceraldehyde 3-phosphate to yield 1-deoxy-D-xylulose-5-phosphate (DXP). In Clostridium acetobutylicum (strain ATCC 824 / DSM 792 / JCM 1419 / IAM 19013 / LMG 5710 / NBRC 13948 / NRRL B-527 / VKM B-1787 / 2291 / W), this protein is 1-deoxy-D-xylulose-5-phosphate synthase.